Reading from the N-terminus, the 1306-residue chain is Clustered mitochondria protein homolog (1306 aa).

Over residues M1–A11 the composition is skewed to low complexity. Residues M1–G47 form a disordered region. The span at S12–T33 shows a compositional bias: polar residues. The Clu domain occupies D336–M580. 2 disordered regions span residues E630–I689 and K912–A956. Basic and acidic residues predominate over residues E656–I689. TPR repeat units follow at residues A1032 to T1065, L1074 to V1107, and I1116 to V1149. A disordered region spans residues F1275 to K1306. Residues N1285 to G1298 show a composition bias toward basic residues.

It belongs to the CLU family. In terms of assembly, may associate with the eukaryotic translation initiation factor 3 (eIF-3) complex.

The protein resides in the cytoplasm. Functionally, mRNA-binding protein involved in proper cytoplasmic distribution of mitochondria. The protein is Clustered mitochondria protein homolog of Botryotinia fuckeliana (strain B05.10) (Noble rot fungus).